The primary structure comprises 313 residues: Tetraspanning orphan receptor (313 aa).

Residues 1-54 lie on the Extracellular side of the membrane; the sequence is PQCESETNFHYDIPPGYKDDVLVDVNNMSPSLVSDTQKHERGSHEVKIKHFSPY. A helical membrane pass occupies residues 55–75; the sequence is IAVCVTTFSLAFCCFMVHAAI. Over 76–82 the chain is Cytoplasmic; sequence TRQPTHL. Residues 83 to 103 form a helical membrane-spanning segment; sequence LPFFFIQVFDLIICLIHILGF. The Extracellular segment spans residues 104–129; the sequence is MSSTSDIRLVIHTKTGPIYIKSTGLT. The chain crosses the membrane as a helical span at residues 130-150; it reads FIILSISCMMLAFKAYCLGMV. Over 151 to 313 the chain is Cytoplasmic; the sequence is WDCYKYLMLN…NASSNAHSSC (163 aa). Disordered stretches follow at residues 192–218 and 279–313; these read NNSI…YDPA and NTNT…HSSC. Over residues 279 to 295 the composition is skewed to low complexity; it reads NTNTSTTTSVISPLTTT. A compositionally biased stretch (polar residues) spans 301-313; it reads QINNASSNAHSSC.

As to quaternary structure, interacts (via N-terminal extracellular domain) with human C2a. In terms of processing, phosphorylated on tyrosine residues.

The protein localises to the cell membrane. Cell surface receptor that binds to human complement C2a protein. This results in inhibition of the classical and lectin pathways of complement activation, probably due to interference with binding of C2a to C4b and interference with cleavage by C1 or MASP2 such that C3 convertase cannot be formed. This infers resistance to complement-mediated cell lysis, allowing parasite survival and infection. This is Tetraspanning orphan receptor from Schistosoma haematobium (Blood fluke).